Here is a 382-residue protein sequence, read N- to C-terminus: Acetyltransferase eriL (382 aa).

6 helical membrane-spanning segments follow: residues 5–25, 33–53, 59–79, 146–166, 192–212, and 335–355; these read LQPL…LGAV, ALLF…TTTG, IVTW…LLIN, TLFY…SPVF, LWSY…ALGV, and GYMW…DPQF.

The protein belongs to the wax synthase family.

The protein localises to the membrane. It catalyses the reaction cyathatriol + acetyl-CoA = 11-O-acetylcyathatriol + CoA. It carries out the reaction cyathin A3 + acetyl-CoA = 11-O-acetylcyathin A3 + CoA. Its pathway is secondary metabolite biosynthesis. Its function is as follows. Acetyltransferase; part of the gene cluster that mediates the biosynthesis of erinacines, cyathane-xylosides that show unique biological activities, including leishmanicidal activity, stimulating activity for nerve growth-factor synthesis, and agonistic activity toward the kappa opioid receptor. Within the pathway, eriL converts cyathatriol into 11-O-acetyl-cyathatriol. EriL is also able to acetylate cyathin A3 to produce 11-O-acetylcyathin A3. The first step of the erinacines biosynthesis pathway is catalyzed by the geranylgeranyl diphosphate (GGPP) synthase eriE via conversion of farnesyl pyrophosphate and isopentyl pyrophosphate into geranylgeranyl pyrophosphate (GGPP). GGPP is then substrate of the diterpene cyclase eriG for the production of cyatha-3,12-diene. The cytochrome P450 monooxygenase eriI then hydroxylates cyatha-3,12-diene at C-14 of the seven-membered ring to produce erinacol, which is further hydroxylated at C-15 by the cytochrome P450 monooxygenase eriC to yield cyathadiol. The cytochrome P450 monooxygenase eriA then catalyzes C-11 hydroxylation in the presence of the short chain dehydrogenase/reductase (SDR) eriH, which leads to the production of cyathatriol. The acetyltransferase eriL converts cyathatriol into 11-O-acetyl-cyathatriol. The SDR eriH catalyzes further oxidation of 11-O-acetyl-cyathatriol into 1-O-acetylcyathin A3. Finally, the glycosyl transferase eriJ tranfers xylose from UDP-xylose onto C-14 of 11-O-acetyl-cyathatriol to form eracine Q. EriJ is also able to convert 11-O-acetyl-cyathatriol to eracine Q2 by using UDP-D-glucose as cosubstrate, but at a lower rate. The chain is Acetyltransferase eriL from Hericium erinaceus (Lion's mane mushroom).